Consider the following 1036-residue polypeptide: Isoleucine--tRNA ligase (1036 aa).

Residues 48-58 carry the 'HIGH' region motif; it reads PTANGKPHVGH. The short motif at 590–594 is the 'KMSKS' region element; sequence KMSKS. Lys-593 contributes to the ATP binding site.

The protein belongs to the class-I aminoacyl-tRNA synthetase family. IleS type 2 subfamily. In terms of assembly, monomer. It depends on Zn(2+) as a cofactor.

The protein localises to the cytoplasm. It carries out the reaction tRNA(Ile) + L-isoleucine + ATP = L-isoleucyl-tRNA(Ile) + AMP + diphosphate. In terms of biological role, catalyzes the attachment of isoleucine to tRNA(Ile). As IleRS can inadvertently accommodate and process structurally similar amino acids such as valine, to avoid such errors it has two additional distinct tRNA(Ile)-dependent editing activities. One activity is designated as 'pretransfer' editing and involves the hydrolysis of activated Val-AMP. The other activity is designated 'posttransfer' editing and involves deacylation of mischarged Val-tRNA(Ile). This chain is Isoleucine--tRNA ligase, found in Clostridium tetani (strain Massachusetts / E88).